Consider the following 221-residue polypeptide: GTP cyclohydrolase-2 (221 aa).

R63 to E67 contacts GTP. Zn(2+) is bound by residues C68, C79, and C81. Residues Q84, E107 to R109, and T129 each bind GTP. Catalysis depends on D141, which acts as the Proton acceptor. R143 functions as the Nucleophile in the catalytic mechanism. GTP contacts are provided by S164 and K169.

Belongs to the GTP cyclohydrolase II family. Requires Zn(2+) as cofactor.

The enzyme catalyses GTP + 4 H2O = 2,5-diamino-6-hydroxy-4-(5-phosphoribosylamino)-pyrimidine + formate + 2 phosphate + 3 H(+). The protein operates within cofactor biosynthesis; riboflavin biosynthesis; 5-amino-6-(D-ribitylamino)uracil from GTP: step 1/4. In terms of biological role, catalyzes the conversion of GTP to 2,5-diamino-6-ribosylamino-4(3H)-pyrimidinone 5'-phosphate (DARP), formate and pyrophosphate. The polypeptide is GTP cyclohydrolase-2 (Streptomyces coelicolor (strain ATCC BAA-471 / A3(2) / M145)).